Here is a 249-residue protein sequence, read N- to C-terminus: Pyridoxine 5'-phosphate synthase (249 aa).

Asparagine 7 serves as a coordination point for 3-amino-2-oxopropyl phosphate. 9–10 provides a ligand contact to 1-deoxy-D-xylulose 5-phosphate; sequence DH. Residue arginine 18 participates in 3-amino-2-oxopropyl phosphate binding. The Proton acceptor role is filled by histidine 43. Arginine 45 and histidine 50 together coordinate 1-deoxy-D-xylulose 5-phosphate. Residue glutamate 70 is the Proton acceptor of the active site. Threonine 100 contributes to the 1-deoxy-D-xylulose 5-phosphate binding site. Histidine 198 functions as the Proton donor in the catalytic mechanism. 3-amino-2-oxopropyl phosphate contacts are provided by residues alanine 199 and 220–221; that span reads GH.

The protein belongs to the PNP synthase family. Homooctamer; tetramer of dimers.

It localises to the cytoplasm. It catalyses the reaction 3-amino-2-oxopropyl phosphate + 1-deoxy-D-xylulose 5-phosphate = pyridoxine 5'-phosphate + phosphate + 2 H2O + H(+). Its pathway is cofactor biosynthesis; pyridoxine 5'-phosphate biosynthesis; pyridoxine 5'-phosphate from D-erythrose 4-phosphate: step 5/5. In terms of biological role, catalyzes the complicated ring closure reaction between the two acyclic compounds 1-deoxy-D-xylulose-5-phosphate (DXP) and 3-amino-2-oxopropyl phosphate (1-amino-acetone-3-phosphate or AAP) to form pyridoxine 5'-phosphate (PNP) and inorganic phosphate. The sequence is that of Pyridoxine 5'-phosphate synthase from Azoarcus sp. (strain BH72).